The primary structure comprises 419 residues: Imidazolonepropionase (419 aa).

Fe(3+)-binding residues include H87 and H89. H87 and H89 together coordinate Zn(2+). 4-imidazolone-5-propanoate contacts are provided by R96, Y159, and H192. An N-formimidoyl-L-glutamate-binding site is contributed by Y159. H257 lines the Fe(3+) pocket. H257 provides a ligand contact to Zn(2+). Q260 lines the 4-imidazolone-5-propanoate pocket. A Fe(3+)-binding site is contributed by D332. D332 contributes to the Zn(2+) binding site. N-formimidoyl-L-glutamate-binding residues include N334 and G336. A 4-imidazolone-5-propanoate-binding site is contributed by S337.

Belongs to the metallo-dependent hydrolases superfamily. HutI family. Zn(2+) is required as a cofactor. It depends on Fe(3+) as a cofactor.

The protein resides in the cytoplasm. It carries out the reaction 4-imidazolone-5-propanoate + H2O = N-formimidoyl-L-glutamate. The protein operates within amino-acid degradation; L-histidine degradation into L-glutamate; N-formimidoyl-L-glutamate from L-histidine: step 3/3. Its function is as follows. Catalyzes the hydrolytic cleavage of the carbon-nitrogen bond in imidazolone-5-propanoate to yield N-formimidoyl-L-glutamate. It is the third step in the universal histidine degradation pathway. The polypeptide is Imidazolonepropionase (Alteromonas mediterranea (strain DSM 17117 / CIP 110805 / LMG 28347 / Deep ecotype)).